Reading from the N-terminus, the 283-residue chain is Lactoylglutathione lyase GLX1 (283 aa).

Residue Ala2 is modified to N-acetylalanine. VOC domains are found at residues 17 to 141 and 147 to 275; these read RFLH…LIQR and PFCQ…LVDN. Residue His20 participates in Zn(2+) binding. Arg24 provides a ligand contact to substrate. Glu71 is a binding site for Zn(2+). Positions 75 and 89 each coordinate substrate. The Zn(2+) site is built by His89, Glu137, and Gln150. Residue Glu137 is the Proton donor/acceptor of the active site. Residues Gln150 and Arg154 each contribute to the substrate site. Gln150 lines the a divalent metal cation pocket. Glu201 lines the Zn(2+) pocket. Residue Glu201 coordinates a divalent metal cation. A substrate-binding site is contributed by Asn205. An a divalent metal cation-binding site is contributed by Gln219. A substrate-binding site is contributed by 251–252; that stretch reads PL. Val271 contacts a divalent metal cation.

Belongs to the glyoxalase I family. Homodimer. Requires Zn(2+) as cofactor. Phosphorylated by SnRK2.8.

The enzyme catalyses (R)-S-lactoylglutathione = methylglyoxal + glutathione. It functions in the pathway secondary metabolite metabolism; methylglyoxal degradation; (R)-lactate from methylglyoxal: step 1/2. Its function is as follows. Catalyzes the conversion of hemimercaptal, formed from methylglyoxal and glutathione, to S-lactoylglutathione. This chain is Lactoylglutathione lyase GLX1, found in Arabidopsis thaliana (Mouse-ear cress).